Consider the following 411-residue polypeptide: tRNA (guanine(37)-N(1))-methyltransferase (411 aa).

S-adenosyl-L-methionine contacts are provided by residues histidine 216, 254 to 255, 282 to 283, and asparagine 303; these read DL and DG. Residues 391-411 form a disordered region; the sequence is ERQASKQDDPKRRKVAAENAA.

This sequence belongs to the class I-like SAM-binding methyltransferase superfamily. TRM5/TYW2 family. As to quaternary structure, monomer.

The protein localises to the mitochondrion matrix. It localises to the nucleus. Its subcellular location is the cytoplasm. The enzyme catalyses guanosine(37) in tRNA + S-adenosyl-L-methionine = N(1)-methylguanosine(37) in tRNA + S-adenosyl-L-homocysteine + H(+). Specifically methylates the N1 position of guanosine-37 in various cytoplasmic and mitochondrial tRNAs. Methylation is not dependent on the nature of the nucleoside 5' of the target nucleoside. This is the first step in the biosynthesis of wybutosine (yW), a modified base adjacent to the anticodon of tRNAs and required for accurate decoding. This Phytophthora infestans (strain T30-4) (Potato late blight agent) protein is tRNA (guanine(37)-N(1))-methyltransferase.